Here is a 253-residue protein sequence, read N- to C-terminus: PAXIP1-associated glutamate-rich protein 1A (253 aa).

2 disordered regions span residues 1–108 (MSLA…MPPP) and 126–253 (LQAE…QRKY). Residues 45-66 (KAEEEGKGSQEEAGREGSRPEE) show a composition bias toward basic and acidic residues. The tract at residues 115–159 (YELLATQGTLELQAEILPRRPPTPEAQSEEERSDEEPEAKEEEEE) is sufficient for interaction with NCOA1. Position 137 is a phosphothreonine (Thr137). The span at 141-158 (QSEEERSDEEPEAKEEEE) shows a compositional bias: acidic residues. Residues Ser142 and Ser147 each carry the phosphoserine modification. Residues 160 to 253 (KPHMPTEFDF…NSLFPRQRKY (94 aa)) are sufficient for interaction with ESR1. Residues 194–222 (QKREARLDKVLSDMKRHKKLEEQILRTGR) show a composition bias toward basic and acidic residues. Position 236 is a phosphoserine (Ser236). A compositionally biased stretch (polar residues) spans 238–247 (PLRSSGNSLF).

In terms of assembly, component of the KMT2 family MLL2/MLL3 complex, at least composed of the histone methyltransferases KMT2D and/or KMT2C, the common subunits ASH2L, RBBP5, WDR5 and DPY30, and the complex type-specific subunits PAXIP1/PTIP, PAGR1, NCOA6 and KDM6A; PAXIP1 is required for the association with the MLL2/MLL3 complex. Forms a constitutive complex with PAXIP1/PTIP independently of the MLL2/MLL3 complex. Interacts with NCOA1, ESR1, NR3C1, AR.

The protein resides in the nucleus. In terms of biological role, its association with the histone methyltransferase MLL2/MLL3 complex is suggesting a role in epigenetic transcriptional activation. However, in association with PAXIP1/PTIP is proposed to function at least in part independently of the MLL2/MLL3 complex. Proposed to be recruited by PAXIP1 to sites of DNA damage where the PAGR1:PAXIP1 complex is required for cell survival in response to DNA damage independently of the MLL2/MLL3 complex. However, its function in DNA damage has been questioned. During immunoglobulin class switching in activated B-cells is involved in transcription regulation of downstream switch regions at the immunoglobulin heavy-chain (Igh) locus independently of the MLL2/MLL3 complex. Involved in both estrogen receptor-regulated gene transcription and estrogen-stimulated G1/S cell-cycle transition. Acts as a transcriptional cofactor for nuclear hormone receptors. Inhibits the induction properties of several steroid receptors such as NR3C1, AR and PPARG; the mechanism of inhibition appears to be gene-dependent. May be involved in the regulation of the BMP pathway in extraembryonic development. The protein is PAXIP1-associated glutamate-rich protein 1A of Mus musculus (Mouse).